A 307-amino-acid polypeptide reads, in one-letter code: Nicotinamide/nicotinic acid mononucleotide adenylyltransferase 2 (307 aa).

NAD(+) contacts are provided by Ser16 and Phe17. His24 is a binding site for ATP. Trp92, Thr95, Gly200, Asp202, Leu212, Trp213, and Arg232 together coordinate NAD(+). Position 271-274 (271-274 (TKSR)) interacts with ATP.

The protein belongs to the eukaryotic NMN adenylyltransferase family. Monomer. It depends on Mg(2+) as a cofactor.

Its subcellular location is the golgi apparatus membrane. It is found in the cytoplasmic vesicle membrane. The protein localises to the cytoplasm. It localises to the cell projection. The protein resides in the axon. The enzyme catalyses beta-nicotinamide D-ribonucleotide + ATP + H(+) = diphosphate + NAD(+). It catalyses the reaction nicotinate beta-D-ribonucleotide + ATP + H(+) = deamido-NAD(+) + diphosphate. It participates in cofactor biosynthesis; NAD(+) biosynthesis; NAD(+) from nicotinamide D-ribonucleotide: step 1/1. Its pathway is cofactor biosynthesis; NAD(+) biosynthesis; deamido-NAD(+) from nicotinate D-ribonucleotide: step 1/1. Its function is as follows. Nicotinamide/nicotinate-nucleotide adenylyltransferase that acts as an axon maintenance factor. Axon survival factor required for the maintenance of healthy axons: acts by delaying Wallerian axon degeneration, an evolutionarily conserved process that drives the loss of damaged axons. Catalyzes the formation of NAD(+) from nicotinamide mononucleotide (NMN) and ATP. Can also use the deamidated form; nicotinic acid mononucleotide (NaMN) as substrate but with a lower efficiency. Also catalyzes the reverse reaction, i.e. the pyrophosphorolytic cleavage of NAD(+). For the pyrophosphorolytic activity prefers NAD(+), NADH and NaAD as substrates and degrades nicotinic acid adenine dinucleotide phosphate (NHD) less effectively. Also acts as an activator of ADP-ribosylation by supporting the catalytic activity of PARP16 and promoting mono-ADP-ribosylation of ribosomes by PARP16. May be involved in the maintenance of axonal integrity. This Xenopus tropicalis (Western clawed frog) protein is Nicotinamide/nicotinic acid mononucleotide adenylyltransferase 2 (nmnat2).